We begin with the raw amino-acid sequence, 670 residues long: DNA ligase (670 aa).

NAD(+) is bound by residues 33-37 (DAEYD), 82-83 (SL), and E114. Catalysis depends on K116, which acts as the N6-AMP-lysine intermediate. NAD(+) contacts are provided by R137, E173, K291, and K315. C409, C412, C427, and C433 together coordinate Zn(2+). Residues 592-670 (VQSDRLSGNT…ENALAELLSD (79 aa)) form the BRCT domain.

It belongs to the NAD-dependent DNA ligase family. LigA subfamily. Mg(2+) serves as cofactor. Requires Mn(2+) as cofactor.

It catalyses the reaction NAD(+) + (deoxyribonucleotide)n-3'-hydroxyl + 5'-phospho-(deoxyribonucleotide)m = (deoxyribonucleotide)n+m + AMP + beta-nicotinamide D-nucleotide.. In terms of biological role, DNA ligase that catalyzes the formation of phosphodiester linkages between 5'-phosphoryl and 3'-hydroxyl groups in double-stranded DNA using NAD as a coenzyme and as the energy source for the reaction. It is essential for DNA replication and repair of damaged DNA. The protein is DNA ligase of Idiomarina loihiensis (strain ATCC BAA-735 / DSM 15497 / L2-TR).